The chain runs to 632 residues: tRNA uridine 5-carboxymethylaminomethyl modification enzyme MnmG (632 aa).

FAD is bound by residues 13 to 18 (GGGHAG), V125, and S180. 273–287 (GPRYCPSIEDKVVRF) serves as a coordination point for NAD(+). An FAD-binding site is contributed by Q370.

The protein belongs to the MnmG family. In terms of assembly, homodimer. Heterotetramer of two MnmE and two MnmG subunits. The cofactor is FAD.

Its subcellular location is the cytoplasm. NAD-binding protein involved in the addition of a carboxymethylaminomethyl (cmnm) group at the wobble position (U34) of certain tRNAs, forming tRNA-cmnm(5)s(2)U34. In Nitrosospira multiformis (strain ATCC 25196 / NCIMB 11849 / C 71), this protein is tRNA uridine 5-carboxymethylaminomethyl modification enzyme MnmG.